A 632-amino-acid polypeptide reads, in one-letter code: Chaperone protein HtpG (632 aa).

Residues 1-339 (MTQQTMSFQA…SSDLPLNVSR (339 aa)) are a; substrate-binding. Residues 340–559 (EILQESRDVK…DNDMSGYLQR (220 aa)) form a b region. Residues 560–632 (MLKAAGQNAP…TNALLLSRAA (73 aa)) form a c region.

It belongs to the heat shock protein 90 family. In terms of assembly, homodimer.

Its subcellular location is the cytoplasm. Functionally, molecular chaperone. Has ATPase activity. This is Chaperone protein HtpG from Burkholderia thailandensis (strain ATCC 700388 / DSM 13276 / CCUG 48851 / CIP 106301 / E264).